The sequence spans 227 residues: PKHD-type hydroxylase CC_0027 (227 aa).

One can recognise a Fe2OG dioxygenase domain in the interval 78–178 (TILSPMFNRY…RTASFFWIQS (101 aa)). The Fe cation site is built by histidine 96, aspartate 98, and histidine 159. Arginine 169 contacts 2-oxoglutarate.

Requires Fe(2+) as cofactor. The cofactor is L-ascorbate.

The protein is PKHD-type hydroxylase CC_0027 of Caulobacter vibrioides (strain ATCC 19089 / CIP 103742 / CB 15) (Caulobacter crescentus).